Reading from the N-terminus, the 320-residue chain is Beta-sarcoglycan (320 aa).

Over residues 1-10 (MAAAAAAAAA) the composition is skewed to low complexity. The interval 1–34 (MAAAAAAAAATEQQSSNGPVKKSMREKAVERRNV) is disordered. Residues 1–67 (MAAAAAAAAA…GLRGRKGNLA (67 aa)) lie on the Cytoplasmic side of the membrane. Basic and acidic residues predominate over residues 23-34 (SMREKAVERRNV). The chain crosses the membrane as a helical; Signal-anchor for type II membrane protein span at residues 68–88 (ICVIVLLFILAVINLLITLVI). Residues 89 to 320 (WAVIRIGPNG…VADNPCGNTH (232 aa)) are Extracellular-facing. 3 N-linked (GlcNAc...) asparagine glycosylation sites follow: N160, N213, and N260. Intrachain disulfides connect C290–C316 and C292–C309.

The protein belongs to the sarcoglycan beta/delta/gamma/zeta family. Cross-link to form 2 major subcomplexes: one consisting of SGCB, SGCD and SGCG and the other consisting of SGCB and SGCD. The association between SGCB and SGCG is particularly strong while SGCA is loosely associated with the other sarcoglycans. Post-translationally, disulfide bonds are present.

It is found in the cell membrane. The protein localises to the sarcolemma. It localises to the cytoplasm. The protein resides in the cytoskeleton. In terms of biological role, component of the sarcoglycan complex, a subcomplex of the dystrophin-glycoprotein complex which forms a link between the F-actin cytoskeleton and the extracellular matrix. In Mesocricetus auratus (Golden hamster), this protein is Beta-sarcoglycan (SGCB).